Consider the following 332-residue polypeptide: Glycerol-3-phosphate dehydrogenase [NAD(P)+] (332 aa).

3 residues coordinate NADPH: Trp-11, Arg-30, and Lys-108. Sn-glycerol 3-phosphate contacts are provided by Lys-108, Gly-137, and Ser-139. Position 141 (Ala-141) interacts with NADPH. 5 residues coordinate sn-glycerol 3-phosphate: Lys-192, Asp-245, Ser-255, Arg-256, and Asn-257. Catalysis depends on Lys-192, which acts as the Proton acceptor. Residue Arg-256 participates in NADPH binding. Val-280 and Glu-282 together coordinate NADPH.

It belongs to the NAD-dependent glycerol-3-phosphate dehydrogenase family.

Its subcellular location is the cytoplasm. The catalysed reaction is sn-glycerol 3-phosphate + NAD(+) = dihydroxyacetone phosphate + NADH + H(+). It carries out the reaction sn-glycerol 3-phosphate + NADP(+) = dihydroxyacetone phosphate + NADPH + H(+). It functions in the pathway membrane lipid metabolism; glycerophospholipid metabolism. Its function is as follows. Catalyzes the reduction of the glycolytic intermediate dihydroxyacetone phosphate (DHAP) to sn-glycerol 3-phosphate (G3P), the key precursor for phospholipid synthesis. The protein is Glycerol-3-phosphate dehydrogenase [NAD(P)+] of Paraburkholderia phymatum (strain DSM 17167 / CIP 108236 / LMG 21445 / STM815) (Burkholderia phymatum).